A 305-amino-acid chain; its full sequence is GMP synthase [glutamine-hydrolyzing] subunit B (305 aa).

In terms of domain architecture, GMPS ATP-PPase spans Val2 to Arg184. ATP is bound at residue Ser29–Ser35.

As to quaternary structure, heterodimer composed of a glutamine amidotransferase subunit (A) and a GMP-binding subunit (B).

The catalysed reaction is XMP + L-glutamine + ATP + H2O = GMP + L-glutamate + AMP + diphosphate + 2 H(+). It participates in purine metabolism; GMP biosynthesis; GMP from XMP (L-Gln route): step 1/1. Catalyzes the synthesis of GMP from XMP. The sequence is that of GMP synthase [glutamine-hydrolyzing] subunit B from Methanoculleus marisnigri (strain ATCC 35101 / DSM 1498 / JR1).